The primary structure comprises 195 residues: MAFMLSLLMALVLVSYGLGGSLGCYLSENHMLHAQKNLKLLARMNRLSPHSCLQDRKDFGLPRKMVEGSQLQKDQAISVLHEMLQQCFNLFHTERSSAAWDNTLLEQLCTGLHQQLDDLDARLGPLMGQKDSGMGRMGPILTVKKYFQGIHVYLKEKKYSDCAWEVIRVEMMRALSSSTTLQERLKKMGGNLNSP.

The N-terminal stretch at 1 to 23 (MAFMLSLLMALVLVSYGLGGSLG) is a signal peptide. Disulfide bonds link cysteine 52-cysteine 162 and cysteine 87-cysteine 109.

The protein belongs to the alpha/beta interferon family. IFN-alphaII subfamily.

It localises to the secreted. Functionally, paracrine hormone primarily responsible for maternal recognition of pregnancy. Interacts with endometrial receptors, probably type I interferon receptors, and blocks estrogen receptor expression, preventing the estrogen-induced increase in oxytocin receptor expression in the endometrium. This results in the suppression of the pulsatile endometrial release of the luteolytic hormone prostaglandin F2-alpha, hindering the regression of the corpus luteum (luteolysis) and therefore a return to ovarian cyclicity. This, and a possible direct effect of IFN-tau on prostaglandin synthesis, leads in turn to continued ovarian progesterone secretion, which stimulates the secretion by the endometrium of the nutrients required for the growth of the conceptus. In summary, displays particularly high antiviral and antiproliferative potency concurrently with particular weak cytotoxicity, high antiluteolytic activity and immunomodulatory properties. In contrast with other IFNs, IFN-tau is not virally inducible. This Giraffa camelopardalis (Giraffe) protein is Interferon tau (IFNT).